Consider the following 264-residue polypeptide: MKKLKLHGFNNLTKSLSFCIYDICYVKTAEERDGYIAYIDELYNANRLTEILSETCSIIGANILNIARQDYEPQGASVTILVSEEPVDPQLIDPTEHPGPLPEAVVAHLDKSHICVHTYPESHPEAGLCTFRADIEVSTCGVISPLNALNYLIHQLESDIVTIDYRVRGFTRDINGMKYFIDHEINSIQNFMSEDMKGLYDMMDVNVYQENIFHTKMLLKEFDLKHYMFHTQPEDLSEEERKVITDLLWKEMREIYYGRNIPAV.

The active-site Schiff-base intermediate with substrate; via pyruvic acid is the S112. S112 carries the pyruvic acid (Ser); by autocatalysis modification. H117 serves as the catalytic Proton acceptor; for processing activity. C140 (proton donor; for catalytic activity) is an active-site residue.

The protein belongs to the prokaryotic AdoMetDC family. Type 2 subfamily. In terms of assembly, heterooctamer of four alpha and four beta chains arranged as a tetramer of alpha/beta heterodimers. Pyruvate is required as a cofactor. Is synthesized initially as an inactive proenzyme. Formation of the active enzyme involves a self-maturation process in which the active site pyruvoyl group is generated from an internal serine residue via an autocatalytic post-translational modification. Two non-identical subunits are generated from the proenzyme in this reaction, and the pyruvate is formed at the N-terminus of the alpha chain, which is derived from the carboxyl end of the proenzyme. The post-translation cleavage follows an unusual pathway, termed non-hydrolytic serinolysis, in which the side chain hydroxyl group of the serine supplies its oxygen atom to form the C-terminus of the beta chain, while the remainder of the serine residue undergoes an oxidative deamination to produce ammonia and the pyruvoyl group blocking the N-terminus of the alpha chain.

It catalyses the reaction S-adenosyl-L-methionine + H(+) = S-adenosyl 3-(methylsulfanyl)propylamine + CO2. It participates in amine and polyamine biosynthesis; S-adenosylmethioninamine biosynthesis; S-adenosylmethioninamine from S-adenosyl-L-methionine: step 1/1. In terms of biological role, catalyzes the decarboxylation of S-adenosylmethionine to S-adenosylmethioninamine (dcAdoMet), the propylamine donor required for the synthesis of the polyamines spermine and spermidine from the diamine putrescine. In Enterobacter sp. (strain 638), this protein is S-adenosylmethionine decarboxylase proenzyme.